The chain runs to 76 residues: MIAQYQRAASLWTLSDTHAILDRLFQTDAMIRSGGTPLQGPLMQLCLYAIVVHAGRAPHRYCTTLQEQCGLQNEIY.

This is an uncharacterized protein from Treponema pallidum (strain Nichols).